The following is a 312-amino-acid chain: DNA-directed RNA polymerase subunit alpha (312 aa).

Residues M1–D226 form an alpha N-terminal domain (alpha-NTD) region. The segment at K243–D312 is alpha C-terminal domain (alpha-CTD).

The protein belongs to the RNA polymerase alpha chain family. In terms of assembly, homodimer. The RNAP catalytic core consists of 2 alpha, 1 beta, 1 beta' and 1 omega subunit. When a sigma factor is associated with the core the holoenzyme is formed, which can initiate transcription.

It carries out the reaction RNA(n) + a ribonucleoside 5'-triphosphate = RNA(n+1) + diphosphate. Functionally, DNA-dependent RNA polymerase catalyzes the transcription of DNA into RNA using the four ribonucleoside triphosphates as substrates. In Lactobacillus delbrueckii subsp. bulgaricus (strain ATCC 11842 / DSM 20081 / BCRC 10696 / JCM 1002 / NBRC 13953 / NCIMB 11778 / NCTC 12712 / WDCM 00102 / Lb 14), this protein is DNA-directed RNA polymerase subunit alpha.